The chain runs to 298 residues: GTP cyclohydrolase FolE2 (298 aa).

It belongs to the GTP cyclohydrolase IV family.

It catalyses the reaction GTP + H2O = 7,8-dihydroneopterin 3'-triphosphate + formate + H(+). Its pathway is cofactor biosynthesis; 7,8-dihydroneopterin triphosphate biosynthesis; 7,8-dihydroneopterin triphosphate from GTP: step 1/1. Converts GTP to 7,8-dihydroneopterin triphosphate. The chain is GTP cyclohydrolase FolE2 from Azotobacter vinelandii (strain DJ / ATCC BAA-1303).